Consider the following 502-residue polypeptide: Cytochrome P450 71A1 (502 aa).

The chain crosses the membrane as a helical span at residues 7 to 21 (LLFLAIALTFFLLKL). C443 contributes to the heme binding site.

The protein belongs to the cytochrome P450 family. Heme is required as a cofactor. As to expression, mesocarp.

The protein resides in the microsome membrane. The protein localises to the endoplasmic reticulum membrane. Involved in the metabolism of compounds associated with the development of flavor in the ripening fruit process, possibly by acting as trans-cinnamic acid 4-hydrolase. The chain is Cytochrome P450 71A1 (CYP71A1) from Persea americana (Avocado).